The chain runs to 123 residues: Protein Wnt-7b (123 aa).

The O-palmitoleoyl serine; by PORCN moiety is linked to residue serine 1. Residues 33–61 are disordered linker; sequence VEAVRATRLRQPTFLKIKKPRTYRKPMVT. Residues cysteine 89 and cysteine 104 are joined by a disulfide bond. N-linked (GlcNAc...) asparagine glycosylation occurs at asparagine 90.

Belongs to the Wnt family. Palmitoleoylation is required for efficient binding to frizzled receptors. Depalmitoleoylation leads to Wnt signaling pathway inhibition.

It is found in the secreted. The protein localises to the extracellular space. Its subcellular location is the extracellular matrix. Functionally, ligand for members of the frizzled family of seven transmembrane receptors that functions in the canonical Wnt/beta-catenin signaling pathway. Required for normal fusion of the chorion and the allantois during placenta development. Required for central nervous system (CNS) angiogenesis and blood-brain barrier regulation. This chain is Protein Wnt-7b (WNT-7B), found in Alopias vulpinus (Common thresher shark).